A 287-amino-acid polypeptide reads, in one-letter code: HTH-type transcriptional regulator MurR (287 aa).

The 77-residue stretch at 1–77 folds into the HTH rpiR-type domain; the sequence is MLYLAKMRNA…MALIEEHSVS (77 aa). The segment at residues 37–56 is a DNA-binding region (H-T-H motif); the sequence is SRNMAKQLEISQSSIVKFAQ. An SIS domain is found at 128-268; it reads VINLISKAPL…FVGMVQLNDV (141 aa).

In terms of assembly, homotetramer.

Its pathway is amino-sugar metabolism; N-acetylmuramate degradation [regulation]. Represses the expression of the murPQ operon involved in the uptake and degradation of N-acetylmuramic acid (MurNAc). Binds to two adjacent inverted repeats within the operator region. MurNAc 6-phosphate, the substrate of MurQ, is the specific inducer that weakens binding of MurR to the operator. The chain is HTH-type transcriptional regulator MurR from Salmonella arizonae (strain ATCC BAA-731 / CDC346-86 / RSK2980).